Consider the following 159-residue polypeptide: Protein UXT homolog (159 aa).

It belongs to the UXT family.

This Nematostella vectensis (Starlet sea anemone) protein is Protein UXT homolog.